Reading from the N-terminus, the 232-residue chain is Probable fimbrial chaperone LpfB (232 aa).

Positions 1 to 24 (MDRMMKSKFVALALSLFLSQSVLA) are cleaved as a signal peptide.

This sequence belongs to the periplasmic pilus chaperone family.

It is found in the periplasm. In terms of biological role, part of the lpfABCC'DE fimbrial operon. LP fimbriae may participate in the interaction with eukaryotic cells by assisting in microcolony formation. The polypeptide is Probable fimbrial chaperone LpfB (lpfB) (Escherichia coli O157:H7).